The primary structure comprises 334 residues: Leucine-rich repeat-containing protein 26 (334 aa).

The first 26 residues, 1 to 26 (MRGPSWSRPRPLLLLLLLLSPWPVWA), serve as a signal peptide directing secretion. The Extracellular segment spans residues 27-261 (QVSATASPSG…HCAQPLALRD (235 aa)). The 38-residue stretch at 34-71 (PSGSLGAPDCPEVCTCVPGGLASCSALSLPAVPPGLSL) folds into the LRRNT domain. 2 disulfide bridges follow: Cys43-Cys49 and Cys47-Cys57. LRR repeat units follow at residues 72 to 93 (RLRALLLDHNRVRALPPGAFAG), 96 to 117 (ALQRLDLRENGLHSVHVRAFWG), 120 to 141 (ALQLLDLSANQLEALAPGTFAP), 144 to 167 (ALRNLSLAGNRLARLEPAALGALP), and 168 to 190 (LLRSLSLQDNELAALAPGLLGRL). Asn147 is a glycosylation site (N-linked (GlcNAc...) asparagine). Positions 201–255 (NPWGCGCALRPLCAWLRRHPLPASEAETVLCVWPGRLTLSPLTAFSDAAFSHCAQ) constitute an LRRCT domain. Intrachain disulfides connect Cys205-Cys231 and Cys207-Cys253. The chain crosses the membrane as a helical span at residues 262–282 (LAVVYTLGPASFLVSLASCLA). Residues 283 to 334 (LGSGLTACRARRRRLRTAALRPPRPPDPNPDPDPHGCASPADPGSPAAAAQA) are Cytoplasmic-facing. The tract at residues 298–334 (RTAALRPPRPPDPNPDPDPHGCASPADPGSPAAAAQA) is disordered. Positions 304-313 (PPRPPDPNPD) are enriched in pro residues. Residues 320 to 334 (ASPADPGSPAAAAQA) show a composition bias toward low complexity.

As to quaternary structure, interacts with KCNMA1. In terms of tissue distribution, isoform 1 is expressed highly in normal prostate and salivary gland, very weakly in colon, pancreas, and intestine, and not at all in other tissues. Isoform 1 is expressed highly in many cancer cell lines and in breast cancer, pancreatic cancer and colon cancer. Isoform 2 is expressed in cancer cell lines.

The protein localises to the cell membrane. It is found in the cytoplasm. It localises to the cytoskeleton. Functionally, auxiliary protein of the large-conductance, voltage and calcium-activated potassium channel (BK alpha). Required for the conversion of BK alpha channels from a high-voltage to a low-voltage activated channel type in non-excitable cells. These are characterized by negative membrane voltages and constant low levels of calcium. This Homo sapiens (Human) protein is Leucine-rich repeat-containing protein 26 (LRRC26).